A 632-amino-acid polypeptide reads, in one-letter code: Signal-transduction and transcriptional-control protein (632 aa).

In terms of domain architecture, PAS spans 197–270 (TYQYLNKITD…GQSYEDEEIM (74 aa)). The region spanning 324-554 (IIGQSEAMKR…LENCIENIVN (231 aa)) is the Sigma-54 factor interaction domain. ATP-binding positions include 352–359 (GESGTGKE) and 416–425 (ANEGTLFLDE). Residues 606–625 (ISKACRILGINRSTLYIKIK) constitute a DNA-binding region (H-T-H motif).

This Clostridium beijerinckii (Clostridium MP) protein is Signal-transduction and transcriptional-control protein (stc).